A 310-amino-acid polypeptide reads, in one-letter code: MVEAGVKTALAARVESLGGCEVKAGEPLAPLTSVRAGGAAEALVRPRSPDALVALLKLAREEGVPVSILGGGANTLVGDGGVPGLTLKLPGDLFPEVADVGPEEGRLTLGAGAAIVRLINVMRAHALVGAEFLAGIPGTLGGAVSMNAGTKNGEAFRVIEAVEVATADGVGWLTKAQVPYSYRHSELPPGGVVTRVRFALRKGDVVASKAVMDADLGYRKRTQPLSQPNFGSVFTNPPGDHAGRLIELAGLKGYSLGRAQVSTLHANWIVNLGGATARDVLGLVTLMQQRVLEQSGVDMKPEVKRLGDFL.

The 169-residue stretch at 35-203 (RAGGAAEALV…TRVRFALRKG (169 aa)) folds into the FAD-binding PCMH-type domain. Residue R183 is part of the active site. Residue S232 is the Proton donor of the active site. Residue E302 is part of the active site.

It belongs to the MurB family. It depends on FAD as a cofactor.

The protein localises to the cytoplasm. The enzyme catalyses UDP-N-acetyl-alpha-D-muramate + NADP(+) = UDP-N-acetyl-3-O-(1-carboxyvinyl)-alpha-D-glucosamine + NADPH + H(+). It participates in cell wall biogenesis; peptidoglycan biosynthesis. Cell wall formation. The polypeptide is UDP-N-acetylenolpyruvoylglucosamine reductase (Myxococcus xanthus (strain DK1622)).